The primary structure comprises 458 residues: MEFDTIAAISTALGEGAIAIVRVSGEDAIEKVNRIFKGKDLTAVSSHTIHYGHIVDLDTNQVIEEVMVSIMRAPKTFTREDIVEVNCHGGLVSVNKVLQLILAQGVRLAEPGEFTKRAFLNGRIDLSQAEAVMDLIRAKTDRAMNVAINQMEGRLSKLIGRLRQEILETLAHVEVNIDYPEYDDVEEMTHRILIEKATHVQNEIEKILETSKQGKILREGIATAIIGRPNVGKSSLLNSLVQEKKAIVTDIAGTTRDVIEEYVNVRGVPLRLIDTAGIRETEDIVEQIGVERSKEMMSQADLVLIVVNYSEPLTNEDEELFRAVQGKDFIVIVNKTDLPQKIEMERVTELASEKRVITTSLIEEKGVDELEKAIADLFFEGTIESADMTYVSNARHIGLLTQARKTIGDAIAAIENGVPIDMVQIDLTRTWEILGEITGDTVHESLIDQLFSQFCLGK.

Positions 22, 84, and 123 each coordinate (6S)-5-formyl-5,6,7,8-tetrahydrofolate. The 160-residue stretch at 220–379 (GIATAIIGRP…LEKAIADLFF (160 aa)) folds into the TrmE-type G domain. N230 provides a ligand contact to K(+). GTP-binding positions include 230-235 (NVGKSS), 249-255 (TDIAGTT), and 274-277 (DTAG). Residue S234 coordinates Mg(2+). K(+) is bound by residues T249, I251, and T254. T255 contacts Mg(2+). K458 contributes to the (6S)-5-formyl-5,6,7,8-tetrahydrofolate binding site.

Belongs to the TRAFAC class TrmE-Era-EngA-EngB-Septin-like GTPase superfamily. TrmE GTPase family. In terms of assembly, homodimer. Heterotetramer of two MnmE and two MnmG subunits. The cofactor is K(+).

It localises to the cytoplasm. Exhibits a very high intrinsic GTPase hydrolysis rate. Involved in the addition of a carboxymethylaminomethyl (cmnm) group at the wobble position (U34) of certain tRNAs, forming tRNA-cmnm(5)s(2)U34. In Bacillus cytotoxicus (strain DSM 22905 / CIP 110041 / 391-98 / NVH 391-98), this protein is tRNA modification GTPase MnmE.